The chain runs to 170 residues: Elicitin-like protein 1 (170 aa).

The N-terminal stretch at 1 to 19 (MFSKTLVVLAAVAAVTVNG) is a signal peptide. 3 disulfide bridges follow: Cys-25–Cys-91, Cys-47–Cys-76, and Cys-71–Cys-118. Residues 122 to 170 (GGGSTPTTAPPTSTTPTTAPPTGTTPTTAPPAGTTPGVTPSPTTPKPAC) form a disordered region. Residues 126–162 (TPTTAPPTSTTPTTAPPTGTTPTTAPPAGTTPGVTPS) are compositionally biased toward low complexity.

Belongs to the elicitin family.

The protein localises to the secreted. In terms of biological role, induces local and distal defense responses (incompatible hypersensitive reaction) in plants from the solanaceae and cruciferae families. Elicits leaf necrosis and causes the accumulation of pathogenesis-related proteins. Might interact with the lipidic molecules of the plasma membrane. In Pythium oligandrum (Mycoparasitic fungus), this protein is Elicitin-like protein 1 (POD-1).